A 621-amino-acid polypeptide reads, in one-letter code: NADPH-dependent diflavin oxidoreductase 1 (621 aa).

One can recognise a Flavodoxin-like domain in the interval isoleucine 6 to isoleucine 168. Residues serine 12 to alanine 17, serine 59 to glycine 62, leucine 106 to asparagine 115, and glutamate 142 each bind FMN. In terms of domain architecture, FAD-binding FR-type spans lysine 224–leucine 489. FAD-binding positions include arginine 381, arginine 411–serine 414, and glycine 443–threonine 446. NADP(+) contacts are provided by residues serine 536–arginine 537 and threonine 545–glutamine 549. Tryptophan 621 lines the FAD pocket.

It belongs to the NADPH-dependent diflavin oxidoreductase NDOR1 family. The protein in the N-terminal section; belongs to the flavodoxin family. This sequence in the C-terminal section; belongs to the flavoprotein pyridine nucleotide cytochrome reductase family. In terms of assembly, interacts with DRE2; as part of the cytosolic iron-sulfur (Fe-S) protein assembly (CIA) machinery. Requires FAD as cofactor. It depends on FMN as a cofactor.

The protein localises to the cytoplasm. The protein resides in the mitochondrion. It carries out the reaction 2 oxidized [2Fe-2S]-[protein] + NADPH = 2 reduced [2Fe-2S]-[protein] + NADP(+) + H(+). Functionally, NADPH-dependent reductase which is a central component of the cytosolic iron-sulfur (Fe-S) protein assembly (CIA) machinery. Transfers electrons from NADPH via its FAD and FMN prosthetic groups to the [2Fe-2S] cluster of DRE2, another key component of the CIA machinery. In turn, this reduced cluster provides electrons for assembly of cytosolic iron-sulfur cluster proteins. Positively controls H(2)O(2)-induced cell death. The chain is NADPH-dependent diflavin oxidoreductase 1 from Candida glabrata (strain ATCC 2001 / BCRC 20586 / JCM 3761 / NBRC 0622 / NRRL Y-65 / CBS 138) (Yeast).